A 304-amino-acid polypeptide reads, in one-letter code: 15-cis-phytoene synthase (304 aa).

Belongs to the phytoene/squalene synthase family. ATP is required as a cofactor. The cofactor is Mn(2+). It depends on Mg(2+) as a cofactor.

It catalyses the reaction 2 (2E,6E,10E)-geranylgeranyl diphosphate = 15-cis-phytoene + 2 diphosphate. It participates in carotenoid biosynthesis; astaxanthin biosynthesis. It functions in the pathway carotenoid biosynthesis; phytoene biosynthesis. Its function is as follows. Involved in the biosynthesis of carotenoids for the production of astaxanthin. Catalyzes the condensation of two molecules of geranylgeranyl diphosphate (GGPP) to give prephytoene diphosphate (PPPP) and the subsequent rearrangement of the cyclopropylcarbinyl intermediate to yield 15-cis phytoene. The protein is 15-cis-phytoene synthase (crtB) of Paracoccus sp. (strain N81106 / MBIC 01143) (Agrobacterium aurantiacum).